Reading from the N-terminus, the 479-residue chain is ATP-dependent protease ATPase subunit HslU (479 aa).

Residues Ile-32, 74-79 (GVGKTE), Asp-290, Glu-355, and Arg-427 each bind ATP.

The protein belongs to the ClpX chaperone family. HslU subfamily. As to quaternary structure, a double ring-shaped homohexamer of HslV is capped on each side by a ring-shaped HslU homohexamer. The assembly of the HslU/HslV complex is dependent on binding of ATP.

The protein resides in the cytoplasm. Its function is as follows. ATPase subunit of a proteasome-like degradation complex; this subunit has chaperone activity. The binding of ATP and its subsequent hydrolysis by HslU are essential for unfolding of protein substrates subsequently hydrolyzed by HslV. HslU recognizes the N-terminal part of its protein substrates and unfolds these before they are guided to HslV for hydrolysis. The sequence is that of ATP-dependent protease ATPase subunit HslU from Leptospira interrogans serogroup Icterohaemorrhagiae serovar Lai (strain 56601).